Consider the following 101-residue polypeptide: Anti-sigma factor RshA (101 aa).

Positions 1–20 (MSETEREDERWTPPIGPIDP) are disordered. 4 residues coordinate iron-sulfur cluster: cysteine 25, histidine 51, cysteine 55, and cysteine 58. Threonine 96 is subject to Phosphothreonine.

It belongs to the zinc-associated anti-sigma factor (ZAS) superfamily. As to quaternary structure, interacts with cognate ECF RNA polymerase sigma factor SigH under reducing conditions; the complex is disrupted under oxiding conditions or as temperatures rise. Binding inhibits the interaction of SigH with the RNA polymerase catalytic core. Iron-sulfur cluster serves as cofactor. In terms of processing, phosphorylated, probably by PknB. Phosphorylation decreases interaction with SigH, probably leading to increased SigH-mediated transcription.

Its function is as follows. A redox-regulated anti-sigma factor for cognate extracytoplasmic function (ECF) sigma factor SigH. ECF sigma factors are held in an inactive form by an anti-sigma factor. Overexpression leads to increased susceptibility to diamide. In Mycolicibacterium smegmatis (strain ATCC 700084 / mc(2)155) (Mycobacterium smegmatis), this protein is Anti-sigma factor RshA (rshA).